Consider the following 427-residue polypeptide: Peptidase B (427 aa).

Positions 195 and 200 each coordinate Mn(2+). Lys-207 is a catalytic residue. Mn(2+) contacts are provided by Asp-218, Asp-277, and Glu-279. Arg-281 is a catalytic residue.

Belongs to the peptidase M17 family. Homohexamer. Requires Mn(2+) as cofactor.

The protein localises to the cytoplasm. It catalyses the reaction Release of an N-terminal amino acid, Xaa, from a peptide or arylamide. Xaa is preferably Glu or Asp but may be other amino acids, including Leu, Met, His, Cys and Gln.. Functionally, probably plays an important role in intracellular peptide degradation. This Citrobacter koseri (strain ATCC BAA-895 / CDC 4225-83 / SGSC4696) protein is Peptidase B.